The chain runs to 326 residues: Malate dehydrogenase (326 aa).

Residue 12-18 (GGTGQIA) participates in NAD(+) binding. 2 residues coordinate substrate: Arg93 and Arg99. NAD(+) contacts are provided by residues Asn106, Gln113, and 130–132 (VGN). The substrate site is built by Asn132 and Arg163. His188 (proton acceptor) is an active-site residue.

The protein belongs to the LDH/MDH superfamily. MDH type 2 family.

It catalyses the reaction (S)-malate + NAD(+) = oxaloacetate + NADH + H(+). Functionally, catalyzes the reversible oxidation of malate to oxaloacetate. The protein is Malate dehydrogenase of Chlamydia trachomatis serovar A (strain ATCC VR-571B / DSM 19440 / HAR-13).